The following is a 442-amino-acid chain: Kelch domain-containing protein 10 (442 aa).

The interval methionine 1–lysine 57 is disordered. The residue at position 13 (arginine 13) is an Omega-N-methylarginine. A compositionally biased stretch (gly residues) spans glycine 15–threonine 39. Kelch repeat units follow at residues arginine 87 to leucine 154, alanine 155 to serine 198, cysteine 199 to arginine 260, tyrosine 261 to histidine 319, serine 320 to valine 364, and tyrosine 365 to proline 403. The interval valine 401–lysine 442 is interaction with CUL2.

It belongs to the KLHDC10 family. In terms of assembly, component of a CRL2 E3 ubiquitin-protein ligase complex, also named ECS (Elongin BC-CUL2/5-SOCS-box protein) complex, composed of CUL2, Elongin BC (ELOB and ELOC), RBX1 and substrate-specific adapter KLHDC10. Interacts (via the 6 Kelch repeats) with PPP5C.

It localises to the nucleus. It is found in the cytoplasm. It functions in the pathway protein modification; protein ubiquitination. Substrate-recognition component of a Cul2-RING (CRL2) E3 ubiquitin-protein ligase complex of the DesCEND (destruction via C-end degrons) pathway, which recognizes a C-degron located at the extreme C-terminus of target proteins, leading to their ubiquitination and degradation. The C-degron recognized by the DesCEND pathway is usually a motif of less than ten residues and can be present in full-length proteins, truncated proteins or proteolytically cleaved forms. The CRL2(KLHDC10) complex specifically recognizes proteins with a proline-glycine (Pro-Gly) or an alanine tail (CAT tail) at the C-terminus, leading to their ubiquitination and degradation. The CRL2(KLHDC10) complex is involved in the ribosome-associated quality control (RQC) pathway, which mediates the extraction of incompletely synthesized nascent chains from stalled ribosomes: CRL2(KLHDC10) acts downstream of NEMF and recognizes CAT tails associated with stalled nascent chains, leading to their ubiquitination and degradation. Participates in the oxidative stress-induced cell death through MAP3K5 activation. Inhibits PPP5C phosphatase activity on MAP3K5. Acts as a regulator of necroptosis. This is Kelch domain-containing protein 10 from Homo sapiens (Human).